We begin with the raw amino-acid sequence, 859 residues long: Rab effector MyRIP (859 aa).

In terms of domain architecture, RabBD spans 4-124 (KLDLSGLTDD…AQSLEWFYNN (121 aa)). The FYVE-type zinc-finger motif lies at 63-105 (CCMRCCSPFTFLVNTKRQCGDCKFNVCKSCCSYQKHEKAWVCC). The myosin-binding stretch occupies residues 143 to 560 (RKHRLESGAC…LDTHQVSDDL (418 aa)). The interval 193 to 209 (VALRVAEEAIEEAISKA) is PKA-binding. Positions 232–248 (LTEELATTILQKIIRKQ) are negative regulation of PKA-binding. Residues 251–285 (KSEQQVEEEPGWPHPQSCSTKVADEGTSASPGGYR) form a disordered region. S298 is modified (phosphoserine). 3 disordered regions span residues 302–374 (EEAL…KPKS), 386–629 (VASA…SQSV), and 783–812 (DQKQRTQVQTIDTSRQQRRKLPAPPVKAEK). The span at 316–326 (QPRDQGQHPRA) shows a compositional bias: basic and acidic residues. S350 carries the phosphoserine modification. A compositionally biased stretch (acidic residues) spans 393–403 (MGSDSEEDFDW). A compositionally biased stretch (low complexity) spans 435-450 (PIAASPSSALSPNPEA). 2 stretches are compositionally biased toward basic and acidic residues: residues 484 to 494 (AAEKMRLHGEL) and 607 to 617 (SEPKTESENQK). The tract at residues 495 to 856 (DVNFNPQLAS…DLMEPALESA (362 aa)) is actin-binding. Polar residues-rich tracts occupy residues 618-629 (ESLSSEDNSQSV) and 787-796 (RTQVQTIDTS).

In terms of assembly, binds MYO5A, MYO7A and F-actin. Binds RAB27A that has been activated by GTP-binding via its N-terminus. Interacts with PRKAR2A. Interacts with components of the exocyst complex, including EXOC3 and EXOC4. As to expression, detected in brain, skin, heart, adrenal medulla, pancreas, intestine, liver, kidney, muscle and testis.

The protein resides in the cytoplasm. The protein localises to the perinuclear region. It localises to the cytoplasmic vesicle. It is found in the secretory vesicle. Its function is as follows. Rab effector protein involved in melanosome transport. Serves as link between melanosome-bound RAB27A and the motor proteins MYO5A and MYO7A. May link RAB27A-containing vesicles to actin filaments. Functions as a protein kinase A-anchoring protein (AKAP). May act as a scaffolding protein that links PKA to components of the exocytosis machinery, thus facilitating exocytosis, including insulin release. This is Rab effector MyRIP (MYRIP) from Homo sapiens (Human).